Reading from the N-terminus, the 478-residue chain is Zinc finger protein 410 (478 aa).

Disordered stretches follow at residues 84-113 (PDGEETRAQTVQKSPEFLTTPESPSLLQDL) and 187-214 (NAKTGSNGENVHLGSGDGQPKDSGPLPQ). Residues 103 to 113 (TPESPSLLQDL) show a composition bias toward polar residues. C2H2-type zinc fingers lie at residues 219 to 243 (LKCTVEGCDRTFVWPAHFKYHLKTH), 249 to 273 (FICPAEGCGKSFYVLQRLKVHMRTH), 279 to 303 (FMCHESGCGKQFTTAGNLKNHRRIH), 309 to 333 (FLCEAQGCGRSFAEYSSLRKHLVVH), and 339 to 362 (HQCQVCGKTFSQSGSRNVHMRKHH). The Zn(2+) site is built by Cys221, Cys226, His239, His243, Cys251, Cys256, His269, His273, Cys281, Cys286, His299, His303, Cys311, Cys316, His329, His333, Cys341, Cys344, His357, and His361.

In terms of assembly, interacts with CDKN2A/p14ARF. In terms of processing, O-glycosylated. O-GlcNAcylation may occur in response to increasing glucose levels and affect transcription factor activity. Sumoylated. Sumoylation increases its half-life, possibly by blocking ubiquitin-mediated degradation.

It is found in the nucleus. It localises to the chromosome. Its function is as follows. Transcription factor that binds to the sequence motif 5'-CATCCCATAATA-3', and is specifically required to silence expression of fetal hemoglobin in adult erythroid cells. Prevents expression of fetal hemoglobin genes HBG1 and HBG2 through CHD4: acts as a direct transcriptional activator of CHD4, a central component of the NuRD complex that represses transcription of fetal hemoglobin genes HBG1 and HBG2 in erythroid cells. May also activate transcription of matrix-remodeling genes such as MMP1 during fibroblast senescence. May activate transcription of the gap junction gene GJC1, perhaps in response to increasing glucose. However, recent studies suggest that ZNF410 is dedicated to regulate expression of a single gene: CHD4. In Mus musculus (Mouse), this protein is Zinc finger protein 410.